The primary structure comprises 101 residues: uncharacterized protein (101 aa).

The protein localises to the plastid. It localises to the chloroplast. This is an uncharacterized protein from Chlamydomonas reinhardtii (Chlamydomonas smithii).